The primary structure comprises 37 residues: Somatostatin-37 (37 aa).

Positions 1–2 (AL) are excised as a propeptide. A disulfide bridge links Cys26 with Cys37.

It belongs to the somatostatin family.

Its subcellular location is the secreted. Its function is as follows. Somatostatin inhibits the release of somatotropin. The polypeptide is Somatostatin-37 (sst) (Petromyzon marinus (Sea lamprey)).